The following is a 1075-amino-acid chain: Carbamoyl phosphate synthase large chain (1075 aa).

Residues 1 to 403 (MPKRTDINTI…SLQKALRGLE (403 aa)) are carboxyphosphate synthetic domain. 12 residues coordinate ATP: Arg-129, Arg-169, Gly-175, Gly-176, Gln-208, Val-210, Glu-215, Gly-241, Val-242, His-243, Gln-285, and Glu-299. The ATP-grasp 1 domain maps to 133 to 328 (KDAMTKIGLN…IAKVAAKLAV (196 aa)). Residues Gln-285, Glu-299, and Asn-301 each contribute to the Mg(2+) site. Mn(2+) contacts are provided by Gln-285, Glu-299, and Asn-301. The oligomerization domain stretch occupies residues 404–548 (IGICGFNLRS…YSTYEDECEA (145 aa)). The interval 549–930 (KPTTRQKVMI…AYYKAQLGAG (382 aa)) is carbamoyl phosphate synthetic domain. Residues 673–864 (QKILTDLGLK…LAKIAALVMA (192 aa)) form the ATP-grasp 2 domain. Arg-709, His-748, Leu-750, Glu-755, Gly-780, Ile-781, His-782, Ser-783, Gln-823, and Glu-835 together coordinate ATP. Mg(2+)-binding residues include Gln-823, Glu-835, and Asn-837. 3 residues coordinate Mn(2+): Gln-823, Glu-835, and Asn-837. One can recognise an MGS-like domain in the interval 931–1070 (ERIPSTGKVF…QQLHLSSALA (140 aa)). The tract at residues 931-1075 (ERIPSTGKVF…SSALANQITR (145 aa)) is allosteric domain.

It belongs to the CarB family. Composed of two chains; the small (or glutamine) chain promotes the hydrolysis of glutamine to ammonia, which is used by the large (or ammonia) chain to synthesize carbamoyl phosphate. Tetramer of heterodimers (alpha,beta)4. Mg(2+) serves as cofactor. The cofactor is Mn(2+).

The catalysed reaction is hydrogencarbonate + L-glutamine + 2 ATP + H2O = carbamoyl phosphate + L-glutamate + 2 ADP + phosphate + 2 H(+). It catalyses the reaction hydrogencarbonate + NH4(+) + 2 ATP = carbamoyl phosphate + 2 ADP + phosphate + 2 H(+). The protein operates within amino-acid biosynthesis; L-arginine biosynthesis; carbamoyl phosphate from bicarbonate: step 1/1. Its pathway is pyrimidine metabolism; UMP biosynthesis via de novo pathway; (S)-dihydroorotate from bicarbonate: step 1/3. Its function is as follows. Large subunit of the glutamine-dependent carbamoyl phosphate synthetase (CPSase). CPSase catalyzes the formation of carbamoyl phosphate from the ammonia moiety of glutamine, carbonate, and phosphate donated by ATP, constituting the first step of 2 biosynthetic pathways, one leading to arginine and/or urea and the other to pyrimidine nucleotides. The large subunit (synthetase) binds the substrates ammonia (free or transferred from glutamine from the small subunit), hydrogencarbonate and ATP and carries out an ATP-coupled ligase reaction, activating hydrogencarbonate by forming carboxy phosphate which reacts with ammonia to form carbamoyl phosphate. The protein is Carbamoyl phosphate synthase large chain of Haemophilus ducreyi (strain 35000HP / ATCC 700724).